The primary structure comprises 86 residues: Large ribosomal subunit protein bL27 (86 aa).

A disordered region spans residues 1-23 (MAHKKGTGSTRNGRDSNSKRLGV).

It belongs to the bacterial ribosomal protein bL27 family.

This Prochlorococcus marinus (strain MIT 9515) protein is Large ribosomal subunit protein bL27.